Consider the following 253-residue polypeptide: Ubiquinone/menaquinone biosynthesis C-methyltransferase UbiE (253 aa).

S-adenosyl-L-methionine-binding positions include T76, D97, and 125 to 126 (NA).

The protein belongs to the class I-like SAM-binding methyltransferase superfamily. MenG/UbiE family.

It carries out the reaction a 2-demethylmenaquinol + S-adenosyl-L-methionine = a menaquinol + S-adenosyl-L-homocysteine + H(+). It catalyses the reaction a 2-methoxy-6-(all-trans-polyprenyl)benzene-1,4-diol + S-adenosyl-L-methionine = a 5-methoxy-2-methyl-3-(all-trans-polyprenyl)benzene-1,4-diol + S-adenosyl-L-homocysteine + H(+). Its pathway is quinol/quinone metabolism; menaquinone biosynthesis; menaquinol from 1,4-dihydroxy-2-naphthoate: step 2/2. It functions in the pathway cofactor biosynthesis; ubiquinone biosynthesis. Functionally, methyltransferase required for the conversion of demethylmenaquinol (DMKH2) to menaquinol (MKH2) and the conversion of 2-polyprenyl-6-methoxy-1,4-benzoquinol (DDMQH2) to 2-polyprenyl-3-methyl-6-methoxy-1,4-benzoquinol (DMQH2). The polypeptide is Ubiquinone/menaquinone biosynthesis C-methyltransferase UbiE (Rhodopseudomonas palustris (strain BisB5)).